A 147-amino-acid chain; its full sequence is Large ribosomal subunit protein bL9 (147 aa).

Belongs to the bacterial ribosomal protein bL9 family.

In terms of biological role, binds to the 23S rRNA. In Myxococcus xanthus (strain DK1622), this protein is Large ribosomal subunit protein bL9.